The following is a 146-amino-acid chain: Fluoride-specific ion channel FluC (146 aa).

The next 4 helical transmembrane spans lie at 8–28, 47–67, 91–111, and 121–141; these read FAIA…TLTV, LANL…QALV, IGVL…AVFA, and MLLG…AAVV. Glycine 95 and threonine 98 together coordinate Na(+).

Belongs to the fluoride channel Fluc/FEX (TC 1.A.43) family.

The protein resides in the cell inner membrane. The enzyme catalyses fluoride(in) = fluoride(out). With respect to regulation, na(+) is not transported, but it plays an essential structural role and its presence is essential for fluoride channel function. In terms of biological role, fluoride-specific ion channel. Important for reducing fluoride concentration in the cell, thus reducing its toxicity. This is Fluoride-specific ion channel FluC from Rhodopirellula baltica (strain DSM 10527 / NCIMB 13988 / SH1).